A 77-amino-acid chain; its full sequence is Acyl carrier protein (77 aa).

Positions 2–77 (SSIDKRIKEI…DAIDYITDHT (76 aa)) constitute a Carrier domain. Position 37 is an O-(pantetheine 4'-phosphoryl)serine (serine 37).

It belongs to the acyl carrier protein (ACP) family. 4'-phosphopantetheine is transferred from CoA to a specific serine of apo-ACP by AcpS. This modification is essential for activity because fatty acids are bound in thioester linkage to the sulfhydryl of the prosthetic group.

It localises to the cytoplasm. The protein operates within lipid metabolism; fatty acid biosynthesis. Functionally, carrier of the growing fatty acid chain in fatty acid biosynthesis. The protein is Acyl carrier protein of Geotalea daltonii (strain DSM 22248 / JCM 15807 / FRC-32) (Geobacter daltonii).